The chain runs to 174 residues: Ubiquitin-like protein 4B (174 aa).

Residues 1–76 (MFLTVKLLLG…INVIMQPLEK (76 aa)) form the Ubiquitin-like domain. Residues 141 to 156 (EPHVEPAGERELEAKA) are compositionally biased toward basic and acidic residues. The interval 141 to 174 (EPHVEPAGERELEAKARPQSSCDMEEKEEAAADQ) is disordered. Residues 163–174 (DMEEKEEAAADQ) show a composition bias toward acidic residues.

It is found in the cytoplasm. The protein is Ubiquitin-like protein 4B (UBL4B) of Homo sapiens (Human).